Consider the following 626-residue polypeptide: Probable serine/threonine-protein kinase CCRP1 (626 aa).

The region spanning 36–291 (YSKGRMLGKG…LDEILQHPFL (256 aa)) is the Protein kinase domain. Residues 42–50 (LGKGGFAKC) and K65 contribute to the ATP site. Position 71 is a phosphoserine (S71). Residue D159 is the Proton acceptor of the active site. Residues 399 to 433 (NFTKTGSWQSNLNGTQSVKGSSRPQTVQQKGDLKS) are disordered. Polar residues predominate over residues 400–427 (FTKTGSWQSNLNGTQSVKGSSRPQTVQQ). 2 consecutive POLO box domains span residues 471–554 (WVKK…YLEG) and 574–626 (YVKK…PISP).

The protein belongs to the protein kinase superfamily. Ser/Thr protein kinase family. CDC5/Polo subfamily. As to expression, embryo.

It catalyses the reaction L-seryl-[protein] + ATP = O-phospho-L-seryl-[protein] + ADP + H(+). It carries out the reaction L-threonyl-[protein] + ATP = O-phospho-L-threonyl-[protein] + ADP + H(+). Functionally, may play a role in the division of some cell types. In Zea mays (Maize), this protein is Probable serine/threonine-protein kinase CCRP1 (CCRP1).